We begin with the raw amino-acid sequence, 231 residues long: tRNA (guanine-N(1)-)-methyltransferase (231 aa).

S-adenosyl-L-methionine contacts are provided by residues G109 and I133–L138.

It belongs to the RNA methyltransferase TrmD family. In terms of assembly, homodimer.

Its subcellular location is the cytoplasm. It carries out the reaction guanosine(37) in tRNA + S-adenosyl-L-methionine = N(1)-methylguanosine(37) in tRNA + S-adenosyl-L-homocysteine + H(+). Its function is as follows. Specifically methylates guanosine-37 in various tRNAs. The polypeptide is tRNA (guanine-N(1)-)-methyltransferase (Nocardia farcinica (strain IFM 10152)).